Here is a 429-residue protein sequence, read N- to C-terminus: Acetyltransferase pyr8 (429 aa).

9 helical membrane-spanning segments follow: residues 12 to 32, 39 to 56, 69 to 89, 154 to 174, 221 to 241, 300 to 320, 324 to 344, 365 to 385, and 409 to 429; these read IAQELALYLAFTVPTAFVIIT, LRLAWTPCLLYILYRFSL, GVAAGQATVAALQCLNLLLIT, YVLRESAIIIWQYLLLDLIHM, VCLNIVSRIYCLVLVVLRISA, IFFTFFTSAVLHLACDAILGI, GSGAMPFFCVVPLAIMFEDGV, LVGFLWVGSWMYATSPWYLYP, and VAQKVLLVYGVVLYWAIGGEI.

This sequence belongs to the wax synthase family.

It is found in the membrane. It participates in secondary metabolite biosynthesis; terpenoid biosynthesis. In terms of biological role, acetyltransferase; part of the gene cluster that mediates the biosynthesis of pyripyropene A, a specific human acyl-coenzyme A:cholesterol acyltransferase 2 inhibitor. The first step of the pathway is the synthesis of nicotinyl-CoA from nicotinic acid by the nicotinic acid-CoA ligase pyr1. Nicotinyl-CoA is then a substrate of polyketide synthase pyr2 to produce 4-hydroxy-6-(3-pyridinyl)-2H-pyran-2-one (HPPO) which is further prenylated by the polyprenyl transferase pyr6 to yield farnesyl-HPPO. The next steps consist of an epoxidation of farnesyl-HPPO to epoxyfarnesyl-HPPO by FAD-dependent monooxygenase pyr5 and a cyclization of the terpenoid portion by the terpene cyclase pyr4 to yield deacetyl-pyripyropene E. The 2 cytochrome P450 monooxygenases pyr3 and pyr9, and the 2 acetyltransferases pyr7 and pyr8 are involved in the conversion of deacetyl-pyripyropene E into pyripyropene A through several cycles of oxidation and acetylation steps. Pyr7 acetylates deacetyl-pyripyropene E to pyripyropene E which is oxidized to 11-deacetyl-pyripyropene O by pyr3, which is in turn acetylated into pyripyropene O by pyr8. Pyripyropene O is then oxidized to deacetyl-pyripyropene A by pyr9. Deacetyl-pyripyropene A is finally acetylated to pyripyropene A by pyr8. The protein is Acetyltransferase pyr8 of Aspergillus fumigatus (strain ATCC MYA-4609 / CBS 101355 / FGSC A1100 / Af293) (Neosartorya fumigata).